Here is a 339-residue protein sequence, read N- to C-terminus: Protein-glutamate methylesterase/protein-glutamine glutaminase (339 aa).

Residues 2–119 (RIGVVNDMPM…EGNASSQSAR (118 aa)) enclose the Response regulatory domain. The residue at position 53 (Asp-53) is a 4-aspartylphosphate. A CheB-type methylesterase domain is found at 149 to 338 (PTPRRLIAIG…SRIIEACERS (190 aa)). Catalysis depends on residues Ser-160, His-187, and Asp-280.

This sequence belongs to the CheB family. Phosphorylated by CheA. Phosphorylation of the N-terminal regulatory domain activates the methylesterase activity.

It is found in the cytoplasm. It carries out the reaction [protein]-L-glutamate 5-O-methyl ester + H2O = L-glutamyl-[protein] + methanol + H(+). The catalysed reaction is L-glutaminyl-[protein] + H2O = L-glutamyl-[protein] + NH4(+). Its function is as follows. Involved in chemotaxis. Part of a chemotaxis signal transduction system that modulates chemotaxis in response to various stimuli. Catalyzes the demethylation of specific methylglutamate residues introduced into the chemoreceptors (methyl-accepting chemotaxis proteins or MCP) by CheR. Also mediates the irreversible deamidation of specific glutamine residues to glutamic acid. The protein is Protein-glutamate methylesterase/protein-glutamine glutaminase of Mesorhizobium japonicum (strain LMG 29417 / CECT 9101 / MAFF 303099) (Mesorhizobium loti (strain MAFF 303099)).